The primary structure comprises 921 residues: Isoleucine--tRNA ligase (921 aa).

The 'HIGH' region motif lies at 57–67 (PYANGDIHMGH). E553 contributes to the L-isoleucyl-5'-AMP binding site. Positions 594-598 (KMSKS) match the 'KMSKS' region motif. K597 is a binding site for ATP.

It belongs to the class-I aminoacyl-tRNA synthetase family. IleS type 1 subfamily. As to quaternary structure, monomer.

It localises to the cytoplasm. It carries out the reaction tRNA(Ile) + L-isoleucine + ATP = L-isoleucyl-tRNA(Ile) + AMP + diphosphate. Its function is as follows. Catalyzes the attachment of isoleucine to tRNA(Ile). As IleRS can inadvertently accommodate and process structurally similar amino acids such as valine, to avoid such errors it has two additional distinct tRNA(Ile)-dependent editing activities. One activity is designated as 'pretransfer' editing and involves the hydrolysis of activated Val-AMP. The other activity is designated 'posttransfer' editing and involves deacylation of mischarged Val-tRNA(Ile). The chain is Isoleucine--tRNA ligase from Bacillus subtilis (strain 168).